The chain runs to 570 residues: nebramycin 5' synthase (570 aa).

Residues 1–354 form a kae1-like region; sequence MRVLGLNGWP…AAAAVAVELG (354 aa). Position 12 (Asp12) interacts with tobramycin. Residue His14 is the Proton acceptor of the active site. ATP is bound at residue Lys39. Residues His114, His118, and Asp137 each contribute to the Fe cation site. 3 residues coordinate carbamoyl adenylate: Gln139, Gly168, and Glu172. Tobramycin-binding residues include Glu172 and Asp228. 2 residues coordinate carbamoyl adenylate: Gly310 and Asn314. Residue Asp338 coordinates Fe cation. The segment at 367 to 570 is yrdC-like; the sequence is GPEFSPDQVR…PYLVTKDLRH (204 aa). Positions 418 and 449 each coordinate ATP. 418-419 serves as a coordination point for carbamoyl phosphate; it reads RA. Carbamoyl phosphate-binding positions include Arg498 and 528–530; that span reads NTS.

This sequence belongs to the NodU/CmcH family. It depends on Fe(2+) as a cofactor.

The enzyme catalyses tobramycin + carbamoyl phosphate + ATP + H2O = nebramycin 5' + AMP + phosphate + diphosphate + H(+). The catalysed reaction is kanamycin A + carbamoyl phosphate + ATP + H2O = 6''-O-carbamoylkanamycin A + AMP + phosphate + diphosphate + H(+). It catalyses the reaction carbamoyl phosphate + ATP + H2O = carbamoyl adenylate + phosphate + diphosphate. It carries out the reaction tobramycin + carbamoyl adenylate = nebramycin 5' + AMP + H(+). The enzyme catalyses carbamoyl adenylate + kanamycin A = 6''-O-carbamoylkanamycin A + AMP + H(+). Its pathway is antibiotic biosynthesis; kanamycin biosynthesis. The protein operates within antibiotic biosynthesis; tobramycin biosynthesis. Its activity is regulated as follows. ADP inhibits the formation of nebramycin 5'. TobZ is involved in the biosynthesis of the 2-deoxystreptamine-containing aminoglycoside antibiotics such as nebramycin 5 and 6-O-carbamoylkanamycin. Catalyzes the hydrolysis of carbamoyl phosphate and its subsequent adenylation by ATP to yield O-carbamoyladenylate. Then it catalyzes the transfer of the carbamoyl moiety from O-carbamoyladenylate to the tobramycin 6-hydroxy group to yield nebramycin 5'. It catalyzes the same reaction with kanamycin A. These reactions are considerably slower in the presence of deoxy-ATP. The sequence is that of nebramycin 5' synthase (tobZ) from Streptoalloteichus tenebrarius (strain ATCC 17920 / DSM 40477 / JCM 4838 / CBS 697.72 / NBRC 16177 / NCIMB 11028 / NRRL B-12390 / A12253. 1 / ISP 5477) (Streptomyces tenebrarius).